The sequence spans 258 residues: UPF0246 protein YaaA (258 aa).

Belongs to the UPF0246 family.

The chain is UPF0246 protein YaaA from Escherichia coli (strain SMS-3-5 / SECEC).